A 450-amino-acid polypeptide reads, in one-letter code: Deoxyguanosinetriphosphate triphosphohydrolase-like protein (450 aa).

In terms of domain architecture, HD spans 61 to 201 (RLTHSLEVAQ…AKLAPELNAD (141 aa)).

It belongs to the dGTPase family. Type 2 subfamily.

This Pasteurella multocida (strain Pm70) protein is Deoxyguanosinetriphosphate triphosphohydrolase-like protein.